The chain runs to 202 residues: uncharacterized protein (202 aa).

Residues 1 to 20 are disordered; the sequence is MVGAVTQIADRPTDPSPWSP. The HTH tetR-type domain occupies 19-79; the sequence is SPRETELLAV…AAFIEGIRQV (61 aa).

This is an uncharacterized protein from Mycobacterium bovis (strain ATCC BAA-935 / AF2122/97).